Consider the following 298-residue polypeptide: NADH-cytochrome b5 reductase 1 (298 aa).

The helical transmembrane segment at 14–34 threads the bilayer; that stretch reads VILAGAYLIDPSALPFVAAGV. In terms of domain architecture, FAD-binding FR-type spans 56 to 159; the sequence is KEYRKFKLVD…RGPKGQFSYT (104 aa). Residues 139-154 and 165-197 each bind FAD; these read SELS…GPKG and AIGM…QVNF.

This sequence belongs to the flavoprotein pyridine nucleotide cytochrome reductase family. As to quaternary structure, monomer. Component of the 2-(3-amino-3-carboxypropyl)histidine synthase complex composed of DPH1, DPH2, DPH3 and a NADH-dependent reductase, predominantly CBR1. FAD is required as a cofactor.

The protein resides in the mitochondrion outer membrane. It catalyses the reaction 2 Fe(III)-[cytochrome b5] + NADH = 2 Fe(II)-[cytochrome b5] + NAD(+) + H(+). It carries out the reaction 2 Fe(3+)-[Dph3] + NADH = 2 Fe(2+)-[Dph3] + NAD(+) + H(+). Its pathway is protein modification; peptidyl-diphthamide biosynthesis. In terms of biological role, NADH-dependent reductase for DPH3 and cytochrome b5. Required for the first step of diphthamide biosynthesis, a post-translational modification of histidine which occurs in elongation factor 2. DPH1 and DPH2 transfer a 3-amino-3-carboxypropyl (ACP) group from S-adenosyl-L-methionine (SAM) to a histidine residue, the reaction is assisted by a reduction system comprising DPH3 and a NADH-dependent reductase, predominantly CBR1. By reducing DPH3, also involved in the formation of the tRNA wobble base modification mcm5s 2U (5-methoxycarbonylmethyl-2-thiouridine), mediated by the elongator complex. The cytochrome b5/NADH cytochrome b5 reductase electron transfer system supports the catalytic activity of several sterol biosynthetic enzymes. In Mortierella alpina (Oleaginous fungus), this protein is NADH-cytochrome b5 reductase 1 (CBR1).